The chain runs to 264 residues: MRQPTVAGKFYPLSTKALRKEIVKCFHGLEIMSEDVIGAVVPHAGYVYSGPVAAHAFARLPKADTYVIFGPNHTGYGSPVAMSQDVWNTPFGDVETDRELGKLLAGTIIDMDEVAHRYEHSVEVQIPFLQYLFGSDFKVLPICMGMQDEDTAVEVGLEVARAVKESGKKVVFIASSDLSHYVPQEKAEKSDNYLIDAILDMDVPEIYRRKYEKDITACGYGPITAMLTAAKECGAKNTELVKYGTSGDVTGDPMVVGYAAIIVK.

This sequence belongs to the MEMO1 family.

The chain is MEMO1 family protein Mbur_2394 from Methanococcoides burtonii (strain DSM 6242 / NBRC 107633 / OCM 468 / ACE-M).